Consider the following 277-residue polypeptide: UPF0276 protein PP_0992 (277 aa).

It belongs to the UPF0276 family.

This is UPF0276 protein PP_0992 from Pseudomonas putida (strain ATCC 47054 / DSM 6125 / CFBP 8728 / NCIMB 11950 / KT2440).